A 910-amino-acid chain; its full sequence is Chitin synthase A (910 aa).

The disordered stretch occupies residues 56 to 156 (NYHDDYDPRP…EPAPTPTPAP (101 aa)). 2 stretches are compositionally biased toward basic and acidic residues: residues 57–84 (YHDDYDPRPGGRRHDSDYSLDPNAHHDA) and 130–148 (DPHDPDRDPHPDDPFHDEP). 9 helical membrane-spanning segments follow: residues 366–386 (WFFQAFGQVLDPNICVLIDAG), 448–468 (SAFGFITVLPGAFSAYRYVAL), 583–603 (VYQTISMLFAWFALGNFFLVF), 620–640 (VLFIVFEWLYIAVLITCFILS), 655–675 (MVYFWGVIMAYLMFASIFITV), 701–721 (TLIISLLSTYVMWLVVSIIFL), 730–750 (FIQYLLMTPTYINILNVYAFC), 828–848 (GVVLFWMFCNLALTALVLQAG), and 876–896 (LYSVAGLAAFRFIGAMWFLVV).

Belongs to the chitin synthase family. Class I subfamily.

The protein localises to the cell membrane. The enzyme catalyses [(1-&gt;4)-N-acetyl-beta-D-glucosaminyl](n) + UDP-N-acetyl-alpha-D-glucosamine = [(1-&gt;4)-N-acetyl-beta-D-glucosaminyl](n+1) + UDP + H(+). Its function is as follows. Polymerizes chitin, a structural polymer of the cell wall and septum, by transferring the sugar moiety of UDP-GlcNAc to the non-reducing end of the growing chitin polymer. In Ampelomyces quisqualis (Powdery mildew agent), this protein is Chitin synthase A (CHSA).